We begin with the raw amino-acid sequence, 205 residues long: Urease accessory protein UreE (205 aa).

The segment at 171 to 205 is disordered; that stretch reads AHEAHPHAHSHAGGHGHVHSGHGHGGKHGEHDAES. Basic residues predominate over residues 177–196; that stretch reads HAHSHAGGHGHVHSGHGHGG.

Belongs to the UreE family.

The protein localises to the cytoplasm. Functionally, involved in urease metallocenter assembly. Binds nickel. Probably functions as a nickel donor during metallocenter assembly. The chain is Urease accessory protein UreE from Bordetella parapertussis (strain 12822 / ATCC BAA-587 / NCTC 13253).